The sequence spans 590 residues: Polypeptide N-acetylgalactosaminyltransferase 8 (590 aa).

The Cytoplasmic segment spans residues 1–11 (MCLDIWRHKKK). Residues 12 to 31 (VLPLLLLMAIGSIIYYLYTL) form a helical; Signal-anchor for type II membrane protein membrane-spanning segment. The Lumenal segment spans residues 32–590 (KLEGERDESA…QHFWDNVKTQ (559 aa)). The N-linked (GlcNAc...) asparagine glycan is linked to N77. 5 disulfide bridges follow: C117–C345, C336–C419, C459–C475, C502–C517, and C546–C561. Residues 127–236 (LPSVSVVITY…KGWLEPLIAP (110 aa)) are catalytic subdomain A. Substrate is bound at residue D168. D220 is a Mn(2+) binding site. Residue S221 participates in substrate binding. Residue H222 coordinates Mn(2+). N-linked (GlcNAc...) asparagine glycosylation is present at N241. Residues 291-353 (PHKNPIMNGG…PCSRVGHLFR (63 aa)) are catalytic subdomain B. W322 provides a ligand contact to substrate. Position 350 (H350) interacts with Mn(2+). Residue R353 coordinates substrate. Residues 446–573 (ASGVLQSISS…KNHKQQWKFG (128 aa)) form the Ricin B-type lectin domain.

The protein belongs to the glycosyltransferase 2 family. GalNAc-T subfamily. It depends on Mn(2+) as a cofactor. In terms of tissue distribution, expressed in developing oocytes and egg chambers. During embryonic stages 9-11, expressed in the primordium of the foregut, midgut and hindgut. During embryonic stages 12-13, expressed in the posterior midgut and hindgut. During embryonic stages 14-15, expression continues in the hindgut. No expression detected during embryonic stages 16-17 or in third instar larvae imaginal disks.

It localises to the golgi apparatus membrane. It catalyses the reaction L-seryl-[protein] + UDP-N-acetyl-alpha-D-galactosamine = a 3-O-[N-acetyl-alpha-D-galactosaminyl]-L-seryl-[protein] + UDP + H(+). It carries out the reaction L-threonyl-[protein] + UDP-N-acetyl-alpha-D-galactosamine = a 3-O-[N-acetyl-alpha-D-galactosaminyl]-L-threonyl-[protein] + UDP + H(+). Its pathway is protein modification; protein glycosylation. In terms of biological role, catalyzes the initial reaction in O-linked oligosaccharide biosynthesis, the transfer of an N-acetyl-D-galactosamine residue to a serine or threonine residue on the protein receptor. It can both act as a peptide transferase that transfers GalNAc onto unmodified peptide substrates, and as a glycopeptide transferase that requires the prior addition of a GalNAc on a peptide before adding additional GalNAc moieties. Prefers both EA2 and the diglycosylated Muc5AC-3/13 as substrates, albeit at very low levels fro Muc5AC-3/13. The sequence is that of Polypeptide N-acetylgalactosaminyltransferase 8 from Drosophila melanogaster (Fruit fly).